Reading from the N-terminus, the 84-residue chain is Small ribosomal subunit protein bS20 (84 aa).

Positions 1–32 are disordered; that stretch reads MPRHESAKKRMRQNEKRQKRNKSQKSRVRTKI.

The protein belongs to the bacterial ribosomal protein bS20 family.

Its function is as follows. Binds directly to 16S ribosomal RNA. The protein is Small ribosomal subunit protein bS20 of Salinibacter ruber (strain DSM 13855 / M31).